Here is a 620-residue protein sequence, read N- to C-terminus: Cilia- and flagella-associated protein 52 (620 aa).

WD repeat units lie at residues 62 to 106 (GHGN…LLAR), 109 to 150 (LHKG…AICG), 156 to 195 (LNVG…RKIW), 288 to 327 (QLQG…ETLI), 330 to 369 (CHFD…ELLR), 372 to 411 (VPNM…LMYV), 415 to 454 (AHRI…QKLE), 459 to 498 (EHKS…RNQM), 500 to 539 (LANT…VIRE), 543 to 582 (SLSG…VTHV), and 585 to 620 (GHSG…PYTS).

It belongs to the CFAP52 family. In terms of assembly, microtubule inner protein component of sperm flagellar doublet microtubules. Interacts with BRCA2. Interacts with the CCT chaperonin complex. Interacts with HSP70. Interacts with AK8. Interacts with CFAP45. Interacts with DNAI1. Interacts with IQDC. In terms of tissue distribution, expressed in respiratory cells and sperm (at protein level). Highly expressed in testis. Up-regulated in hepatocellular carcinoma (HCC).

The protein resides in the cytoplasm. It is found in the cytoskeleton. It localises to the cilium axoneme. Its subcellular location is the flagellum axoneme. In terms of biological role, microtubule inner protein (MIP) part of the dynein-decorated doublet microtubules (DMTs) in cilia axoneme. Important for proper ciliary and flagellar beating. May act in cooperation with CFAP45 and axonemal dynein subunit DNAH11. May play a role in cell growth and/or survival. The polypeptide is Cilia- and flagella-associated protein 52 (Homo sapiens (Human)).